A 444-amino-acid polypeptide reads, in one-letter code: Adenylosuccinate synthetase (444 aa).

GTP is bound by residues 19–25 and 47–49; these read GDEGKGK and GHT. D20 functions as the Proton acceptor in the catalytic mechanism. 2 residues coordinate Mg(2+): D20 and G47. IMP-binding positions include 20–23, 45–48, T139, R153, Q234, T249, and R317; these read DEGK and NAGH. Catalysis depends on H48, which acts as the Proton donor. Substrate is bound at residue 313-319; the sequence is TVTGRPR. GTP is bound by residues R319, 345–347, and 427–429; these read KLD and STG.

This sequence belongs to the adenylosuccinate synthetase family. Homodimer. Mg(2+) serves as cofactor.

The protein resides in the cytoplasm. The enzyme catalyses IMP + L-aspartate + GTP = N(6)-(1,2-dicarboxyethyl)-AMP + GDP + phosphate + 2 H(+). The protein operates within purine metabolism; AMP biosynthesis via de novo pathway; AMP from IMP: step 1/2. Its function is as follows. Plays an important role in the de novo pathway of purine nucleotide biosynthesis. Catalyzes the first committed step in the biosynthesis of AMP from IMP. The sequence is that of Adenylosuccinate synthetase from Methylibium petroleiphilum (strain ATCC BAA-1232 / LMG 22953 / PM1).